Consider the following 110-residue polypeptide: Large ribosomal subunit protein uL22 (110 aa).

This sequence belongs to the universal ribosomal protein uL22 family. Part of the 50S ribosomal subunit.

This protein binds specifically to 23S rRNA; its binding is stimulated by other ribosomal proteins, e.g. L4, L17, and L20. It is important during the early stages of 50S assembly. It makes multiple contacts with different domains of the 23S rRNA in the assembled 50S subunit and ribosome. In terms of biological role, the globular domain of the protein is located near the polypeptide exit tunnel on the outside of the subunit, while an extended beta-hairpin is found that lines the wall of the exit tunnel in the center of the 70S ribosome. The protein is Large ribosomal subunit protein uL22 of Baumannia cicadellinicola subsp. Homalodisca coagulata.